The chain runs to 153 residues: L-alanine exporter AlaE (153 aa).

The next 4 helical transmembrane spans lie at 16 to 36 (VAMV…LSEM), 42 to 62 (LSSR…YGLY), 86 to 106 (LFAY…AIGA), and 114 to 134 (AVGS…YFLE).

It belongs to the AlaE exporter family.

Its subcellular location is the cell inner membrane. Functionally, exports L-alanine. The polypeptide is L-alanine exporter AlaE (Musicola paradisiaca (strain Ech703) (Dickeya paradisiaca)).